Consider the following 509-residue polypeptide: 3-octaprenyl-4-hydroxybenzoate carboxy-lyase (509 aa).

N179 lines the Mn(2+) pocket. Residues 182–184, 196–198, and 201–202 contribute to the prenylated FMN site; these read IYR, RWL, and RG. E245 lines the Mn(2+) pocket. The active-site Proton donor is the D304.

It belongs to the UbiD family. As to quaternary structure, homohexamer. The cofactor is prenylated FMN. Mn(2+) is required as a cofactor.

Its subcellular location is the cell membrane. The enzyme catalyses a 4-hydroxy-3-(all-trans-polyprenyl)benzoate + H(+) = a 2-(all-trans-polyprenyl)phenol + CO2. The protein operates within cofactor biosynthesis; ubiquinone biosynthesis. Catalyzes the decarboxylation of 3-octaprenyl-4-hydroxy benzoate to 2-octaprenylphenol, an intermediate step in ubiquinone biosynthesis. The chain is 3-octaprenyl-4-hydroxybenzoate carboxy-lyase from Cupriavidus pinatubonensis (strain JMP 134 / LMG 1197) (Cupriavidus necator (strain JMP 134)).